The primary structure comprises 1050 residues: Diacylglycerol kinase iota (1050 aa).

Disordered stretches follow at residues 52-73 (NPSS…SGSG) and 325-356 (PQNS…ENKG). The segment covering 332-347 (SNRKKKRTSFKRKASK) has biased composition (basic residues). One can recognise a DAGKc domain in the interval 367 to 502 (PLMKPLLVFV…DRWNLHVERN (136 aa)). ANK repeat units follow at residues 943–972 (GHCS…AELL) and 979–1008 (TGET…SLRQ). Residues 1048 to 1050 (TAV) carry the PDZ-binding motif.

It belongs to the eukaryotic diacylglycerol kinase family. Interacts (via PDZ-binding motif) with DLG4; controls the localization of DGKI to the synapse. Interacts (via PDZ-binding motif) with DLG1. Interacts (via PDZ-binding motif) with DLG2. Interacts (via PDZ-binding motif) with DLG3. May interact with RASGRP3; involved in the regulation of RASGRP3 activity. Specifically expressed in brain (at protein level). Expressed in hippocampus, cerebellum, brain stem and spinal cord (at protein level). Highly expressed in hippocampus, cerebellar cortex, olfactory bulb, and olfactory tubercle and to lower extent in the cerebral cortex, caudate putamen, and thalamus. Not detected in the white matter. Also expressed in eye. In terms of tissue distribution, major isoform in brain (at protein level). As to expression, minor isoform in brain (at protein level). Expressed in brain (at protein level).

The protein resides in the cell projection. The protein localises to the axon. It is found in the dendrite. It localises to the presynapse. Its subcellular location is the postsynapse. The protein resides in the postsynaptic density. The protein localises to the synaptic cell membrane. It is found in the cytoplasmic vesicle. It localises to the secretory vesicle. Its subcellular location is the synaptic vesicle membrane. The protein resides in the cytoplasm. The protein localises to the cytosol. It is found in the nucleus. It catalyses the reaction a 1,2-diacyl-sn-glycerol + ATP = a 1,2-diacyl-sn-glycero-3-phosphate + ADP + H(+). The catalysed reaction is 1,2-di-(9Z-octadecenoyl)-sn-glycerol + ATP = 1,2-di-(9Z-octadecenoyl)-sn-glycero-3-phosphate + ADP + H(+). The enzyme catalyses 1-octadecanoyl-2-(9Z,12Z)-octadecadienoyl-sn-glycerol + ATP = 1-octadecanoyl-2-(9Z,12Z-octadecadienoyl)-sn-glycero-3-phosphate + ADP + H(+). It carries out the reaction 1-octadecanoyl-2-(5Z,8Z,11Z,14Z-eicosatetraenoyl)-sn-glycerol + ATP = 1-octadecanoyl-2-(5Z,8Z,11Z,14Z-eicosatetraenoyl)-sn-glycero-3-phosphate + ADP + H(+). Its pathway is lipid metabolism; glycerolipid metabolism. With respect to regulation, activated by phosphatidylserine. In terms of biological role, diacylglycerol kinase that converts diacylglycerol/DAG into phosphatidic acid/phosphatidate/PA and regulates the respective levels of these two bioactive lipids. Thereby, acts as a central switch between the signaling pathways activated by these second messengers with different cellular targets and opposite effects in numerous biological processes. Has probably no preference for any of the diacylglycerols in terms of the acyl chain composition, especially for the acyl chain at the sn-2 position. By controlling the diacylglycerol/DAG-mediated activation of RASGRP3, negatively regulates the Rap1 signaling pathway. May play a role in presynaptic diacylglycerol/DAG signaling and control neurotransmitter release during metabotropic glutamate receptor-dependent long-term depression. Has a decreased affinity for ATP and a reduced diacylglycerol kinase activity. Has no preference for any of the diacylglycerols in terms of the acyl chain composition. Its function is as follows. Has no diacylglycerol kinase activity. This is Diacylglycerol kinase iota from Rattus norvegicus (Rat).